A 286-amino-acid chain; its full sequence is MSWLLFLAHRVALAALPCRRGSRGFGMFYAVRRGRKTGVFLTWNECRAQVDRFPAARFKKFATEDEAWAFVRKSASPEVSEGHENQHGQESEAKASKRLREPLDGDGHESAEPYAKHMKPSVEPAPPVSRDTFSYMGDFVVVYTDGCCSSNGRRRPRAGIGVYWGPGHPLNVGIRLPGRQTNQRAEIHAACKAIEQAKTQNINKLVLYTDSMFTINGITNWVQGWKKNGWKTSAGKEVINKEDFVALERLTQGMDIQWMHVPGHSGFIGNEEADRLAREGAKQSED.

The span at 101–115 shows a compositional bias: basic and acidic residues; the sequence is EPLDGDGHESAEPYA. A disordered region spans residues 101 to 127; that stretch reads EPLDGDGHESAEPYAKHMKPSVEPAPP. The region spanning 136 to 282 is the RNase H type-1 domain; sequence MGDFVVVYTD…ADRLAREGAK (147 aa). 4 residues coordinate Mg(2+): D145, E186, D210, and D274.

It belongs to the RNase H family. Monomer. It depends on Mg(2+) as a cofactor. As to expression, ubiquitous.

It localises to the cytoplasm. The catalysed reaction is Endonucleolytic cleavage to 5'-phosphomonoester.. In the presence of magnesium, manganese is inhibitory. Endonuclease that specifically degrades the RNA of RNA-DNA hybrids. Plays a role in RNA polymerase II (RNAp II) transcription termination by degrading R-loop RNA-DNA hybrid formation at G-rich pause sites located downstream of the poly(A) site and behind the elongating RNAp II. This is Ribonuclease H1 (RNASEH1) from Homo sapiens (Human).